We begin with the raw amino-acid sequence, 221 residues long: GTP-binding nuclear protein Ran-1 (221 aa).

Positions 10–174 (DYPSFKLVIV…LYLARKLAGD (165 aa)) constitute a Small GTPase Ran-type domain. 21–28 (DGGTGKTT) serves as a coordination point for GTP. Positions 40 to 48 (KKYEPTIGV) are switch-I. GTP-binding positions include Gly-71, 125–128 (NKVD), and 153–155 (SAK). The segment at 71–87 (GQEKFGGLRDGYYIHGQ) is switch-II.

Belongs to the small GTPase superfamily. Ran family. In terms of assembly, found in a nuclear export complex with RanGTP, exportin and pre-miRNA. Interacts with RANBP1A and RANBP1B. Interacts with TRN1. Interacts with ATX1. Interacts with KPNB1. Binds to XPO1. Interacts with MOS14. Binds to NTF2B.

The protein resides in the nucleus. GTP-binding protein involved in nucleocytoplasmic transport. Required for the import of protein into the nucleus and also for RNA export. Involved in chromatin condensation and control of cell cycle. This is GTP-binding nuclear protein Ran-1 (RAN1) from Arabidopsis thaliana (Mouse-ear cress).